We begin with the raw amino-acid sequence, 341 residues long: Methionine import ATP-binding protein MetN (341 aa).

Residues 2–241 enclose the ABC transporter domain; sequence IELNQIVKRY…PQHDVTKRFV (240 aa). 38–45 contacts ATP; sequence GFSGAGKS.

It belongs to the ABC transporter superfamily. Methionine importer (TC 3.A.1.24) family. As to quaternary structure, the complex is composed of two ATP-binding proteins (MetN), two transmembrane proteins (MetI) and a solute-binding protein (MetQ).

It is found in the cell membrane. It catalyses the reaction L-methionine(out) + ATP + H2O = L-methionine(in) + ADP + phosphate + H(+). The catalysed reaction is D-methionine(out) + ATP + H2O = D-methionine(in) + ADP + phosphate + H(+). In terms of biological role, part of the ABC transporter complex MetNIQ involved in methionine import. Responsible for energy coupling to the transport system. The polypeptide is Methionine import ATP-binding protein MetN (Staphylococcus saprophyticus subsp. saprophyticus (strain ATCC 15305 / DSM 20229 / NCIMB 8711 / NCTC 7292 / S-41)).